A 250-amino-acid polypeptide reads, in one-letter code: Phosphonates import ATP-binding protein PhnC (250 aa).

Positions 2–247 (ILFNNVNKVW…KLDAQAMKKI (246 aa)) constitute an ABC transporter domain. 35-42 (GLSGAGKT) contacts ATP.

Belongs to the ABC transporter superfamily. Phosphonates importer (TC 3.A.1.9.1) family. As to quaternary structure, the complex is composed of two ATP-binding proteins (PhnC), two transmembrane proteins (PhnE) and a solute-binding protein (PhnD).

It localises to the cell membrane. The catalysed reaction is phosphonate(out) + ATP + H2O = phosphonate(in) + ADP + phosphate + H(+). Part of the ABC transporter complex PhnCDE involved in phosphonates import. Responsible for energy coupling to the transport system. This chain is Phosphonates import ATP-binding protein PhnC, found in Mycoplasma capricolum subsp. capricolum (strain California kid / ATCC 27343 / NCTC 10154).